We begin with the raw amino-acid sequence, 150 residues long: uncharacterized protein (150 aa).

Residues 19–39 (SLGMCVILIDGLIVLTAAFVF) traverse the membrane as a helical segment.

The protein to B.subtilis YpjC, YqfU and YitT.

The protein localises to the cell membrane. This is an uncharacterized protein from Bacillus sp. (strain PS3).